A 254-amino-acid polypeptide reads, in one-letter code: 3-deoxy-manno-octulosonate cytidylyltransferase (254 aa).

The protein belongs to the KdsB family.

It is found in the cytoplasm. It catalyses the reaction 3-deoxy-alpha-D-manno-oct-2-ulosonate + CTP = CMP-3-deoxy-beta-D-manno-octulosonate + diphosphate. The protein operates within nucleotide-sugar biosynthesis; CMP-3-deoxy-D-manno-octulosonate biosynthesis; CMP-3-deoxy-D-manno-octulosonate from 3-deoxy-D-manno-octulosonate and CTP: step 1/1. It functions in the pathway bacterial outer membrane biogenesis; lipopolysaccharide biosynthesis. In terms of biological role, activates KDO (a required 8-carbon sugar) for incorporation into bacterial lipopolysaccharide in Gram-negative bacteria. In Chlamydia pneumoniae (Chlamydophila pneumoniae), this protein is 3-deoxy-manno-octulosonate cytidylyltransferase.